The primary structure comprises 665 residues: Golgi-associated RAB2B interactor protein 3 (665 aa).

Disordered regions lie at residues 211–240 (EIRG…AGGE), 272–296 (AAAG…GTAG), and 480–590 (SEGY…GSVS). Polar residues predominate over residues 219–232 (NSRPQSSPTVSEAT). Residues 499–513 (EAKEKRERREKDRTS) are compositionally biased toward basic and acidic residues. 2 stretches are compositionally biased toward basic residues: residues 514 to 538 (SRKS…RKTS) and 554 to 566 (GHGR…HSSS). The short motif at 515 to 531 (RKSSHHRRTGMSRHSSK) is the Bipartite nuclear localization signal element. S652 is subject to Phosphoserine.

This sequence belongs to the GARIN family. In terms of assembly, interacts (via N-terminus) with RAB2B (in GTP-bound form). Interacts with FRG1. As to expression, expressed in adult spermatocytes and spermatids.

It localises to the golgi apparatus. The protein resides in the nucleus. The protein localises to the cajal body. Its function is as follows. May be involved in RNA biogenesis. This Mus musculus (Mouse) protein is Golgi-associated RAB2B interactor protein 3.